A 543-amino-acid polypeptide reads, in one-letter code: Chaperonin GroEL 1 (543 aa).

Residues 30 to 33 (TLGP), K51, 87 to 91 (DGTTT), G415, and D496 contribute to the ATP site.

Belongs to the chaperonin (HSP60) family. As to quaternary structure, forms a cylinder of 14 subunits composed of two heptameric rings stacked back-to-back. Interacts with the co-chaperonin GroES.

It localises to the cytoplasm. The enzyme catalyses ATP + H2O + a folded polypeptide = ADP + phosphate + an unfolded polypeptide.. Functionally, together with its co-chaperonin GroES, plays an essential role in assisting protein folding. The GroEL-GroES system forms a nano-cage that allows encapsulation of the non-native substrate proteins and provides a physical environment optimized to promote and accelerate protein folding. This chain is Chaperonin GroEL 1, found in Roseobacter denitrificans (strain ATCC 33942 / OCh 114) (Erythrobacter sp. (strain OCh 114)).